The sequence spans 238 residues: Small ribosomal subunit protein uS2 (238 aa).

This sequence belongs to the universal ribosomal protein uS2 family.

The sequence is that of Small ribosomal subunit protein uS2 from Prochlorococcus marinus (strain SARG / CCMP1375 / SS120).